We begin with the raw amino-acid sequence, 147 residues long: Ubiquitin-conjugating enzyme E2-17 kDa (147 aa).

In terms of domain architecture, UBC core spans 1 to 147 (MALKRINKEL…AREWTRKYAM (147 aa)). Cys-85 (glycyl thioester intermediate) is an active-site residue.

It belongs to the ubiquitin-conjugating enzyme family.

The enzyme catalyses S-ubiquitinyl-[E1 ubiquitin-activating enzyme]-L-cysteine + [E2 ubiquitin-conjugating enzyme]-L-cysteine = [E1 ubiquitin-activating enzyme]-L-cysteine + S-ubiquitinyl-[E2 ubiquitin-conjugating enzyme]-L-cysteine.. The protein operates within protein modification; protein ubiquitination. Catalyzes the covalent attachment of ubiquitin to other proteins. Mediates the selective degradation of short-lived and abnormal proteins. Required for proper telomere behavior during cell divisions and possibly for ubiquitination of proteins involved in postmeiotic stages of spermatogenesis. Deletion mutations are lethal in homozygotes. The polypeptide is Ubiquitin-conjugating enzyme E2-17 kDa (eff) (Drosophila melanogaster (Fruit fly)).